Consider the following 424-residue polypeptide: Enolase (424 aa).

Gln-162 contacts (2R)-2-phosphoglycerate. Glu-204 acts as the Proton donor in catalysis. Mg(2+)-binding residues include Asp-241, Glu-284, and Asp-311. 4 residues coordinate (2R)-2-phosphoglycerate: Lys-336, Arg-365, Ser-366, and Lys-387. The active-site Proton acceptor is Lys-336.

The protein belongs to the enolase family. It depends on Mg(2+) as a cofactor.

It localises to the cytoplasm. The protein localises to the secreted. It is found in the cell surface. The catalysed reaction is (2R)-2-phosphoglycerate = phosphoenolpyruvate + H2O. It participates in carbohydrate degradation; glycolysis; pyruvate from D-glyceraldehyde 3-phosphate: step 4/5. Functionally, catalyzes the reversible conversion of 2-phosphoglycerate (2-PG) into phosphoenolpyruvate (PEP). It is essential for the degradation of carbohydrates via glycolysis. This Mesorhizobium japonicum (strain LMG 29417 / CECT 9101 / MAFF 303099) (Mesorhizobium loti (strain MAFF 303099)) protein is Enolase.